Consider the following 400-residue polypeptide: Tryptophan synthase beta chain (400 aa).

The residue at position 92 (Lys-92) is an N6-(pyridoxal phosphate)lysine.

The protein belongs to the TrpB family. As to quaternary structure, tetramer of two alpha and two beta chains. Pyridoxal 5'-phosphate is required as a cofactor.

It catalyses the reaction (1S,2R)-1-C-(indol-3-yl)glycerol 3-phosphate + L-serine = D-glyceraldehyde 3-phosphate + L-tryptophan + H2O. Its pathway is amino-acid biosynthesis; L-tryptophan biosynthesis; L-tryptophan from chorismate: step 5/5. Functionally, the beta subunit is responsible for the synthesis of L-tryptophan from indole and L-serine. This is Tryptophan synthase beta chain from Neisseria meningitidis serogroup A / serotype 4A (strain DSM 15465 / Z2491).